The sequence spans 484 residues: uncharacterized protein (484 aa).

Residues 47 to 226 form the FAD-binding PCMH-type domain; the sequence is TLPIPAAVVK…TEVTVKIFKF (180 aa).

It belongs to the FAD-binding oxidoreductase/transferase type 4 family.

This is an uncharacterized protein from Escherichia coli (strain K12).